We begin with the raw amino-acid sequence, 272 residues long: ATP-dependent Clp protease proteolytic subunit, mitochondrial (272 aa).

The transit peptide at 1–52 (MWPRVLLGEARVAVDGCRALLSRLAVHFSPPWTAVSCSPLRRSLHGTATRAF) directs the protein to the mitochondrion. The active-site Nucleophile is Ser-149. His-174 is a catalytic residue. Residue Lys-196 is modified to N6-succinyllysine. Lys-207 carries the N6-acetyllysine modification. A disordered region spans residues 240 to 272 (VLVHPPQDGEDEPELVQKETATAPTDPPAPTST).

The protein belongs to the peptidase S14 family. As to quaternary structure, fourteen CLPP subunits assemble into 2 heptameric rings which stack back to back to give a disk-like structure with a central cavity. Component of the ClpXP complex formed by the assembly of two CLPP heptameric rings with two CLPX hexameric rings, giving rise to a symmetrical structure with two central CLPP rings flanked by a CLPX ring at either end of the complex. Detected in liver (at protein level). High levels found in heart, liver and skeletal muscle.

The protein localises to the mitochondrion matrix. The enzyme catalyses Hydrolysis of proteins to small peptides in the presence of ATP and magnesium. alpha-casein is the usual test substrate. In the absence of ATP, only oligopeptides shorter than five residues are hydrolyzed (such as succinyl-Leu-Tyr-|-NHMec, and Leu-Tyr-Leu-|-Tyr-Trp, in which cleavage of the -Tyr-|-Leu- and -Tyr-|-Trp bonds also occurs).. Its function is as follows. Protease component of the ClpXP complex that cleaves peptides and various proteins in an ATP-dependent process. Has low peptidase activity in the absence of CLPX. The ClpXP complex can degrade CSN1S1, CSN2 and CSN3, as well as synthetic peptides (in vitro) and may be responsible for a fairly general and central housekeeping function rather than for the degradation of specific substrates. Cleaves PINK1 in the mitochondrion. The chain is ATP-dependent Clp protease proteolytic subunit, mitochondrial from Mus musculus (Mouse).